The following is a 134-amino-acid chain: Aspartate 1-decarboxylase (134 aa).

The active-site Schiff-base intermediate with substrate; via pyruvic acid is the serine 25. Serine 25 carries the pyruvic acid (Ser) modification. Threonine 57 is a substrate binding site. The Proton donor role is filled by tyrosine 58. A substrate-binding site is contributed by 73–75 (GAA).

The protein belongs to the PanD family. In terms of assembly, heterooctamer of four alpha and four beta subunits. It depends on pyruvate as a cofactor. In terms of processing, is synthesized initially as an inactive proenzyme, which is activated by self-cleavage at a specific serine bond to produce a beta-subunit with a hydroxyl group at its C-terminus and an alpha-subunit with a pyruvoyl group at its N-terminus.

The protein localises to the cytoplasm. It carries out the reaction L-aspartate + H(+) = beta-alanine + CO2. Its pathway is cofactor biosynthesis; (R)-pantothenate biosynthesis; beta-alanine from L-aspartate: step 1/1. In terms of biological role, catalyzes the pyruvoyl-dependent decarboxylation of aspartate to produce beta-alanine. In Mycolicibacterium gilvum (strain PYR-GCK) (Mycobacterium gilvum (strain PYR-GCK)), this protein is Aspartate 1-decarboxylase.